Reading from the N-terminus, the 231-residue chain is MTEVTNSLPTSGLLNEANDEFLGLTLALSKGRILEETMPLLRAAGVELLEDPEASRKLIFPTSNPNVRVLILRASDVPTYVEHGAADFGVAGKDVLLEHGANHVYELLDLKIAQCKLMTAGVKDAPLPNRRLRIATKYVNVARAYFASQGQQVDVIKLYGSMELAPLVGLGDLIVDVVDTGNTLRANGLEARDHICDVSSRLIVNQVSYKRKFALLEPILDSFKNSINSTS.

This sequence belongs to the ATP phosphoribosyltransferase family. Short subfamily. As to quaternary structure, heteromultimer composed of HisG and HisZ subunits.

The protein localises to the cytoplasm. The enzyme catalyses 1-(5-phospho-beta-D-ribosyl)-ATP + diphosphate = 5-phospho-alpha-D-ribose 1-diphosphate + ATP. It participates in amino-acid biosynthesis; L-histidine biosynthesis; L-histidine from 5-phospho-alpha-D-ribose 1-diphosphate: step 1/9. Catalyzes the condensation of ATP and 5-phosphoribose 1-diphosphate to form N'-(5'-phosphoribosyl)-ATP (PR-ATP). Has a crucial role in the pathway because the rate of histidine biosynthesis seems to be controlled primarily by regulation of HisG enzymatic activity. This Psychrobacter arcticus (strain DSM 17307 / VKM B-2377 / 273-4) protein is ATP phosphoribosyltransferase.